Consider the following 623-residue polypeptide: Negative regulator of PDR1-mediated fluconazole resistance JJJ1 (623 aa).

A J domain is found at 4–70 (CYYDLLEVRS…QERAWYDSHK (67 aa)). The C2H2-type zinc finger occupies 363-387 (YDCFICKKSFKSEKQLENHIKTKLH). Disordered regions lie at residues 448 to 476 (QSSV…KLSN), 499 to 581 (GADN…NDAK), and 599 to 623 (SHIQ…KKNK). Positions 453–466 (DSEDFTDDNNDTED) are enriched in acidic residues. A compositionally biased stretch (polar residues) spans 499–508 (GADNSETQNA). The span at 525-538 (ELTRILRELEESKT) shows a compositional bias: basic and acidic residues. Basic residues-rich tracts occupy residues 553–564 (KKKTKAKKKKNK) and 612–623 (KVKKGKRSKKNK).

Its subcellular location is the nucleus. Its function is as follows. Acts as a negative regulator of fluconazole resistance, primarily through down-regulation of the ABC transporter gene CDR1 via inactivation of the PDR1 transcriptional pathway. The polypeptide is Negative regulator of PDR1-mediated fluconazole resistance JJJ1 (Candida glabrata (strain ATCC 2001 / BCRC 20586 / JCM 3761 / NBRC 0622 / NRRL Y-65 / CBS 138) (Yeast)).